A 335-amino-acid chain; its full sequence is Beta-ketoacyl-[acyl-carrier-protein] synthase III (335 aa).

Catalysis depends on residues Cys119 and His261. The ACP-binding stretch occupies residues 262–266 (QANQR). Residue Asn291 is part of the active site.

Belongs to the thiolase-like superfamily. FabH family. As to quaternary structure, homodimer.

Its subcellular location is the cytoplasm. It carries out the reaction malonyl-[ACP] + acetyl-CoA + H(+) = 3-oxobutanoyl-[ACP] + CO2 + CoA. The protein operates within lipid metabolism; fatty acid biosynthesis. Its function is as follows. Catalyzes the condensation reaction of fatty acid synthesis by the addition to an acyl acceptor of two carbons from malonyl-ACP. Catalyzes the first condensation reaction which initiates fatty acid synthesis and may therefore play a role in governing the total rate of fatty acid production. Possesses both acetoacetyl-ACP synthase and acetyl transacylase activities. Its substrate specificity determines the biosynthesis of branched-chain and/or straight-chain of fatty acids. In Prochlorococcus marinus (strain MIT 9301), this protein is Beta-ketoacyl-[acyl-carrier-protein] synthase III.